The primary structure comprises 101 residues: Phosphoribosyl-AMP cyclohydrolase (101 aa).

Asp71 is a binding site for Mg(2+). A Zn(2+)-binding site is contributed by Cys72. 2 residues coordinate Mg(2+): Asp73 and Asp75. Cys88 and Cys95 together coordinate Zn(2+).

This sequence belongs to the PRA-CH family. Homodimer. It depends on Mg(2+) as a cofactor. The cofactor is Zn(2+).

The protein localises to the cytoplasm. It catalyses the reaction 1-(5-phospho-beta-D-ribosyl)-5'-AMP + H2O = 1-(5-phospho-beta-D-ribosyl)-5-[(5-phospho-beta-D-ribosylamino)methylideneamino]imidazole-4-carboxamide. Its pathway is amino-acid biosynthesis; L-histidine biosynthesis; L-histidine from 5-phospho-alpha-D-ribose 1-diphosphate: step 3/9. Catalyzes the hydrolysis of the adenine ring of phosphoribosyl-AMP. This Bacillus cereus (strain ZK / E33L) protein is Phosphoribosyl-AMP cyclohydrolase.